The following is a 430-amino-acid chain: DD-carboxypeptidase/endopeptidase Mpg (430 aa).

Zn(2+) contacts are provided by His-295, Asp-299, and His-375.

This sequence belongs to the peptidase M23B family. As to quaternary structure, monomer. Requires Zn(2+) as cofactor. In terms of processing, likely to be synthesized as a proenzyme. The cleavage of the N-terminal domain is probably required for the activation of the enzyme.

The protein localises to the cell outer membrane. Peptidoglycan (PG) degradation activity is completely inhibited by zinc chelating EDTA and phenanthroline. In terms of biological role, has both endopeptidase and DD-carboxypeptidase activities. Degrades cell wall peptidoglycan (PG) to allow consummate expression of pili. Degrades N.gonorrhoeae and E.coli PG side chains in vitro. Required for proper piliation, which in turn is required for normal colony morphology, resistance to H(2)O(2) damage and defense against killing by human polymorphonuclear leukocytes (PMNs). Involved in type IV pilus biogenesis. Involved in resistance against non-oxidative killing by adherent CXCL8/IL8-primed human PMNs. Protects from killing by PMN-produced antimicrobial factors, which kill by a mechanism completely independent of reactive oxygen species (ROS) production of the PMNs. Provides protection against oxidative damage caused by peroxides H(2)O(2) and cumene hydroperoxide in vitro. This Neisseria gonorrhoeae (strain ATCC 700825 / FA 1090) protein is DD-carboxypeptidase/endopeptidase Mpg.